We begin with the raw amino-acid sequence, 101 residues long: Small ribosomal subunit protein bS18c (101 aa).

The segment covering 1–19 has biased composition (basic residues); it reads MDKSKQLFRKSKRSFRRRL. The tract at residues 1-23 is disordered; sequence MDKSKQLFRKSKRSFRRRLPPIG.

It belongs to the bacterial ribosomal protein bS18 family. In terms of assembly, part of the 30S ribosomal subunit.

It is found in the plastid. Its subcellular location is the chloroplast. This chain is Small ribosomal subunit protein bS18c, found in Acorus calamus (Sweet flag).